The following is a 184-amino-acid chain: ATP synthase subunit delta (184 aa).

The protein belongs to the ATPase delta chain family. In terms of assembly, F-type ATPases have 2 components, F(1) - the catalytic core - and F(0) - the membrane proton channel. F(1) has five subunits: alpha(3), beta(3), gamma(1), delta(1), epsilon(1). F(0) has three main subunits: a(1), b(2) and c(10-14). The alpha and beta chains form an alternating ring which encloses part of the gamma chain. F(1) is attached to F(0) by a central stalk formed by the gamma and epsilon chains, while a peripheral stalk is formed by the delta and b chains.

The protein localises to the cell inner membrane. Its function is as follows. F(1)F(0) ATP synthase produces ATP from ADP in the presence of a proton or sodium gradient. F-type ATPases consist of two structural domains, F(1) containing the extramembraneous catalytic core and F(0) containing the membrane proton channel, linked together by a central stalk and a peripheral stalk. During catalysis, ATP synthesis in the catalytic domain of F(1) is coupled via a rotary mechanism of the central stalk subunits to proton translocation. In terms of biological role, this protein is part of the stalk that links CF(0) to CF(1). It either transmits conformational changes from CF(0) to CF(1) or is implicated in proton conduction. In Rickettsia conorii (strain ATCC VR-613 / Malish 7), this protein is ATP synthase subunit delta.